A 154-amino-acid polypeptide reads, in one-letter code: Ribonuclease H (154 aa).

In terms of domain architecture, RNase H type-1 spans E3 to A144. Residues D12, E50, D72, and D136 each coordinate Mg(2+).

Belongs to the RNase H family. In terms of assembly, monomer. It depends on Mg(2+) as a cofactor.

Its subcellular location is the cytoplasm. It catalyses the reaction Endonucleolytic cleavage to 5'-phosphomonoester.. Endonuclease that specifically degrades the RNA of RNA-DNA hybrids. This Bradyrhizobium sp. (strain ORS 278) protein is Ribonuclease H.